The primary structure comprises 110 residues: Late cornified envelope protein 2D (110 aa).

Belongs to the LCE family. Skin-specific. Expression was readily detected in adult trunk skin, adult arm skin, fetal skin, penal skin, vulva, esophagus and tongue. Not expressed in the cervix, rectum, lung, colon, or placenta.

Its function is as follows. Precursors of the cornified envelope of the stratum corneum. This is Late cornified envelope protein 2D (LCE2D) from Homo sapiens (Human).